We begin with the raw amino-acid sequence, 1012 residues long: Klotho (1012 aa).

The signal sequence occupies residues 1-33; the sequence is MPASAPPRRPRPPPPSLSLLLVLLGLGGRRLRA. The Extracellular portion of the chain corresponds to 34 to 981; the sequence is EPGDGAQTWA…ECSFFHTRKS (948 aa). Glycosyl hydrolase-1 regions lie at residues 57-506 and 515-953; these read FQGT…KNGF and LEGT…SNGF. N-linked (GlcNAc...) asparagine glycans are attached at residues Asn-106, Asn-159, Asn-283, Asn-344, Asn-607, Asn-612, and Asn-694. The chain crosses the membrane as a helical span at residues 982–1002; that stretch reads LLAFIAFLFFASIISLSLIFY. The Cytoplasmic segment spans residues 1003–1012; sequence YSKKGRRSYK.

Belongs to the glycosyl hydrolase 1 family. Klotho subfamily. In terms of assembly, homodimer. Interacts with FGF23 and FGFR1. In terms of processing, N-glycosylated. In terms of tissue distribution, present in cortical renal tubules (at protein level). Soluble peptide is present in serum and cerebrospinal fluid. Expressed in kidney, placenta, small intestine and prostate. Down-regulated in renal cell carcinomas, hepatocellular carcinomas, and in chronic renal failure kidney.

The protein localises to the cell membrane. It localises to the apical cell membrane. The protein resides in the secreted. The catalysed reaction is a beta-D-glucuronoside + H2O = D-glucuronate + an alcohol. May have weak glycosidase activity towards glucuronylated steroids. However, it lacks essential active site Glu residues at positions 239 and 872, suggesting it may be inactive as a glycosidase in vivo. May be involved in the regulation of calcium and phosphorus homeostasis by inhibiting the synthesis of active vitamin D. Essential factor for the specific interaction between FGF23 and FGFR1. In terms of biological role, the Klotho peptide generated by cleavage of the membrane-bound isoform may be an anti-aging circulating hormone which would extend life span by inhibiting insulin/IGF1 signaling. The sequence is that of Klotho (KL) from Homo sapiens (Human).